The following is a 102-amino-acid chain: Alpha-hemoglobin-stabilizing protein (102 aa).

This sequence belongs to the AHSP family. In terms of assembly, monomer. Forms a heterodimer with free alpha-hemoglobin. Does not bind beta-hemoglobin nor alpha(2)beta(2) hemoglobin A. Expressed in spleen, bone marrow, and blood, with highest levels in bone marrow.

It localises to the cytoplasm. Acts as a chaperone to prevent the harmful aggregation of alpha-hemoglobin during normal erythroid cell development. Specifically protects free alpha-hemoglobin from precipitation. In Mus musculus (Mouse), this protein is Alpha-hemoglobin-stabilizing protein (Ahsp).